A 340-amino-acid polypeptide reads, in one-letter code: DNA-directed RNA polymerase subunit alpha (340 aa).

The segment at 1 to 237 (MSSDELVYMN…EQMNPFINFD (237 aa)) is alpha N-terminal domain (alpha-NTD). Residues 256-340 (FNENLYRSVD…PEEDQIKEGE (85 aa)) form an alpha C-terminal domain (alpha-CTD) region.

The protein belongs to the RNA polymerase alpha chain family. In terms of assembly, homodimer. The RNAP catalytic core consists of 2 alpha, 1 beta, 1 beta' and 1 omega subunit. When a sigma factor is associated with the core the holoenzyme is formed, which can initiate transcription.

It carries out the reaction RNA(n) + a ribonucleoside 5'-triphosphate = RNA(n+1) + diphosphate. DNA-dependent RNA polymerase catalyzes the transcription of DNA into RNA using the four ribonucleoside triphosphates as substrates. The chain is DNA-directed RNA polymerase subunit alpha from Desulforapulum autotrophicum (strain ATCC 43914 / DSM 3382 / VKM B-1955 / HRM2) (Desulfobacterium autotrophicum).